Here is a 216-residue protein sequence, read N- to C-terminus: MRLGILGGTFNPIHNAHLRIAEEARDLYQLDRVVFIPAATPPHKPLVGELSFASRLEMVRLAVADNPGFMVSDMEGVRGGRSYSIDTLRELKARYPDDDLFFIVGADSFNDISTWREYEAIFELCNVISVQRPGSTITSLAEALPVAIAGEFCYDPAAKRLNHCSGHAVYALDGVLLDISSSHIRLSVQGGRSIRYLLPDAVEHYIKEQRLYVDAR.

This sequence belongs to the NadD family.

It catalyses the reaction nicotinate beta-D-ribonucleotide + ATP + H(+) = deamido-NAD(+) + diphosphate. It participates in cofactor biosynthesis; NAD(+) biosynthesis; deamido-NAD(+) from nicotinate D-ribonucleotide: step 1/1. Functionally, catalyzes the reversible adenylation of nicotinate mononucleotide (NaMN) to nicotinic acid adenine dinucleotide (NaAD). The protein is Probable nicotinate-nucleotide adenylyltransferase of Citrifermentans bemidjiense (strain ATCC BAA-1014 / DSM 16622 / JCM 12645 / Bem) (Geobacter bemidjiensis).